The primary structure comprises 206 residues: High frequency lysogenization protein HflD homolog (206 aa).

The protein belongs to the HflD family.

It localises to the cytoplasm. The protein resides in the cell inner membrane. This chain is High frequency lysogenization protein HflD homolog, found in Ectopseudomonas mendocina (strain ymp) (Pseudomonas mendocina).